The chain runs to 140 residues: Lysozyme c-1 (140 aa).

The N-terminal stretch at 1–20 is a signal peptide; it reads MKVFSTVLLAIVACCAVAEA. In terms of domain architecture, C-type lysozyme spans 21–140; that stretch reads KTFGKCELAK…KKLPNVSSCF (120 aa). Disulfide bonds link Cys26–Cys139, Cys47–Cys128, Cys81–Cys94, and Cys90–Cys108. Catalysis depends on residues Glu52 and Asp69.

Belongs to the glycosyl hydrolase 22 family. As to expression, expressed in salivary glands and Malpighian tubules.

It catalyses the reaction Hydrolysis of (1-&gt;4)-beta-linkages between N-acetylmuramic acid and N-acetyl-D-glucosamine residues in a peptidoglycan and between N-acetyl-D-glucosamine residues in chitodextrins.. In terms of biological role, lysozymes have primarily a bacteriolytic function; those in tissues and body fluids are associated with the monocyte-macrophage system and enhance the activity of immunoagents. The polypeptide is Lysozyme c-1 (Anopheles gambiae (African malaria mosquito)).